Reading from the N-terminus, the 230-residue chain is Cytidylate kinase (230 aa).

12 to 20 (GPSGTGKST) is an ATP binding site.

Belongs to the cytidylate kinase family. Type 1 subfamily.

The protein resides in the cytoplasm. It carries out the reaction CMP + ATP = CDP + ADP. It catalyses the reaction dCMP + ATP = dCDP + ADP. In Corynebacterium efficiens (strain DSM 44549 / YS-314 / AJ 12310 / JCM 11189 / NBRC 100395), this protein is Cytidylate kinase.